Here is a 169-residue protein sequence, read N- to C-terminus: Peptide deformylase (169 aa).

2 residues coordinate Fe cation: cysteine 91 and histidine 133. Glutamate 134 is a catalytic residue. Histidine 137 provides a ligand contact to Fe cation.

This sequence belongs to the polypeptide deformylase family. Requires Fe(2+) as cofactor.

It catalyses the reaction N-terminal N-formyl-L-methionyl-[peptide] + H2O = N-terminal L-methionyl-[peptide] + formate. Removes the formyl group from the N-terminal Met of newly synthesized proteins. Requires at least a dipeptide for an efficient rate of reaction. N-terminal L-methionine is a prerequisite for activity but the enzyme has broad specificity at other positions. This chain is Peptide deformylase, found in Erwinia tasmaniensis (strain DSM 17950 / CFBP 7177 / CIP 109463 / NCPPB 4357 / Et1/99).